Here is a 264-residue protein sequence, read N- to C-terminus: tRNA (guanine-N(1)-)-methyltransferase (264 aa).

Residues Gly-125 and 145–150 (LGDFVL) each bind S-adenosyl-L-methionine.

The protein belongs to the RNA methyltransferase TrmD family. Homodimer.

The protein resides in the cytoplasm. The catalysed reaction is guanosine(37) in tRNA + S-adenosyl-L-methionine = N(1)-methylguanosine(37) in tRNA + S-adenosyl-L-homocysteine + H(+). Functionally, specifically methylates guanosine-37 in various tRNAs. The polypeptide is tRNA (guanine-N(1)-)-methyltransferase (Burkholderia mallei (strain NCTC 10247)).